The primary structure comprises 71 residues: Disintegrin halysin (71 aa).

One can recognise a Disintegrin domain in the interval 1–71; it reads EAGEECDCGS…ISAGCPRNPF (71 aa). 6 cysteine pairs are disulfide-bonded: C6–C21, C8–C16, C15–C38, C29–C35, C34–C59, and C47–C66. A Cell attachment site motif is present at residues 51–53; the sequence is RGD.

It belongs to the venom metalloproteinase (M12B) family. P-II subfamily. P-IIa sub-subfamily. In terms of assembly, monomer. In terms of tissue distribution, expressed by the venom gland.

The protein localises to the secreted. Inhibits fibrinogen interaction with platelets. Acts by binding to alpha-IIb/beta-3 (ITGA2B/ITGB3) on the platelet surface and inhibits aggregation induced by ADP, thrombin, platelet-activating factor and collagen. In Gloydius blomhoffii (Mamushi), this protein is Disintegrin halysin.